The chain runs to 565 residues: MADNRRSRVITQGVARTPNRAMLRAVGFRDEDFEKPIIGVGNAHSTITPCNVGIGAMARRAEEALREVGAMPMKFGTITVSDGITMGTEGMKYSLVSREVIADSIETVGGGQRMDGMLATGGCDKNMPGAMMALARLDIPGIFVYGGTIKPGHYKGEDLTVVSAFEAVGQYNAGNLSEADLKGVEENACPGAGACGGMFTANTMSSAFEAMGMSLMGSSTVSAEDDEARDVAAEASRVLMDAVHHDRRPSSILTREAFENAFAVVMALGGSTNAVLHLLAIANTAEVPFDLDDVERIRRKVPVLCDLKPSGRFVTSQFHEVGGTPQVMRILLEQGLLHGHCQTITGQTIEALIGHLPPEPPADQEIIMPFDRPLYPEGHLAILRGNLAEEGAVAKVSGIQQRRISGPARVFDSEEECLEAILADGVQAGDVVIVRYEGPKGGPGMREMLAPTSAIIGKGLGDAVGLITDGRFSGGTYGMVVGHVAPEAYDGGTIALIAEGDTVTIDADQNLLQVEVDDAELERRRSQWQVPRPRYRRGVLGKYARLAASASRGAVTDADLFPEQE.

C50 lines the [2Fe-2S] cluster pocket. D82 is a binding site for Mg(2+). C123 is a binding site for [2Fe-2S] cluster. The Mg(2+) site is built by D124 and K125. An N6-carboxylysine modification is found at K125. C195 is a [2Fe-2S] cluster binding site. E447 is a Mg(2+) binding site. S473 serves as the catalytic Proton acceptor.

Belongs to the IlvD/Edd family. As to quaternary structure, homodimer. Requires [2Fe-2S] cluster as cofactor. Mg(2+) is required as a cofactor.

The enzyme catalyses (2R)-2,3-dihydroxy-3-methylbutanoate = 3-methyl-2-oxobutanoate + H2O. It carries out the reaction (2R,3R)-2,3-dihydroxy-3-methylpentanoate = (S)-3-methyl-2-oxopentanoate + H2O. It participates in amino-acid biosynthesis; L-isoleucine biosynthesis; L-isoleucine from 2-oxobutanoate: step 3/4. It functions in the pathway amino-acid biosynthesis; L-valine biosynthesis; L-valine from pyruvate: step 3/4. In terms of biological role, functions in the biosynthesis of branched-chain amino acids. Catalyzes the dehydration of (2R,3R)-2,3-dihydroxy-3-methylpentanoate (2,3-dihydroxy-3-methylvalerate) into 2-oxo-3-methylpentanoate (2-oxo-3-methylvalerate) and of (2R)-2,3-dihydroxy-3-methylbutanoate (2,3-dihydroxyisovalerate) into 2-oxo-3-methylbutanoate (2-oxoisovalerate), the penultimate precursor to L-isoleucine and L-valine, respectively. The polypeptide is Dihydroxy-acid dehydratase (Halorhodospira halophila (strain DSM 244 / SL1) (Ectothiorhodospira halophila (strain DSM 244 / SL1))).